The sequence spans 25 residues: Bombinin-like peptide 4 (25 aa).

Phenylalanine amide is present on Phe25.

This sequence belongs to the bombinin family. In terms of tissue distribution, expressed by the skin glands.

Its subcellular location is the secreted. Its function is as follows. Has antimicrobial activity, but no hemolytic activity. Preference on killing Gram-negative non-enteric bacteria. In Bombina orientalis (Oriental fire-bellied toad), this protein is Bombinin-like peptide 4.